Consider the following 413-residue polypeptide: ATP phosphoribosyltransferase regulatory subunit (413 aa).

Residues Met1–Pro21 form a disordered region.

It belongs to the class-II aminoacyl-tRNA synthetase family. HisZ subfamily. As to quaternary structure, heteromultimer composed of HisG and HisZ subunits.

The protein resides in the cytoplasm. The protein operates within amino-acid biosynthesis; L-histidine biosynthesis; L-histidine from 5-phospho-alpha-D-ribose 1-diphosphate: step 1/9. Its function is as follows. Required for the first step of histidine biosynthesis. May allow the feedback regulation of ATP phosphoribosyltransferase activity by histidine. The protein is ATP phosphoribosyltransferase regulatory subunit of Rubrobacter xylanophilus (strain DSM 9941 / JCM 11954 / NBRC 16129 / PRD-1).